We begin with the raw amino-acid sequence, 612 residues long: MSAELIAVYKDEQIIDLESAKVLGLSDGIKALKGTEPIYFDDSPLALEVIRHSCAHLLAQSLKALYPDAKFFVGPVVEEGFYYDFKTASKISEEDLPKIEAKMKEFAKLKLAITKEVLTREQALERFKGDELKHAVMSKISGDAFGVYQQGEFEDLCKGPHLPNTRFLNHFKLTKLAGAYLGGDESNEMLIRIYGIAFATKEGLKDYLFQIEEAKKRDHRKLGVELGLFSFDDEIGAGLPLWLPKGARLRKRIEDLLSKALLLRGYEPVKGPEILKSDVWKISGHYDNYKENMYFTTIDEQEYGIKPMNCVGHIKVYQSALHSYRDLPLRFYEYGVVHRHEKSGVLHGLLRVREFTQDDAHIFCSFEQIQSEVSAILDFTHKIMQAFDFSYEMELSTRPAKSIGDDKVWEKATSALKEALKEHRIDYKIDEGGGAFYGPKIDIKITDALKRKWQCGTIQVDMNLPERFKLAFTNERNHAEQPVMIHRAILGSFERFIAILSEHFGGNFPFFVAPTQIALIPINEEHHVFALKLKEALKKRDIFVEVLDKNDSLNKKVRLAEKQKIPMILVLGNEEVETEILSIRDREKQAQYKMPLKEFLSMVESKMQEVSF.

The interval 218 to 509 is catalytic; sequence DHRKLGVELG…LSEHFGGNFP (292 aa). Zn(2+) is bound by residues C310, H361, and H486.

The protein belongs to the class-II aminoacyl-tRNA synthetase family. In terms of assembly, homodimer. The cofactor is Zn(2+).

Its subcellular location is the cytoplasm. The catalysed reaction is tRNA(Thr) + L-threonine + ATP = L-threonyl-tRNA(Thr) + AMP + diphosphate + H(+). Catalyzes the attachment of threonine to tRNA(Thr) in a two-step reaction: L-threonine is first activated by ATP to form Thr-AMP and then transferred to the acceptor end of tRNA(Thr). Also edits incorrectly charged L-seryl-tRNA(Thr). This Helicobacter pylori (strain G27) protein is Threonine--tRNA ligase.